The primary structure comprises 317 residues: Flagellar hook-associated protein 3 (317 aa).

Belongs to the bacterial flagellin family.

Its subcellular location is the secreted. It is found in the bacterial flagellum. The polypeptide is Flagellar hook-associated protein 3 (flgL) (Escherichia coli (strain K12)).